The primary structure comprises 442 residues: 23S rRNA (uracil(1939)-C(5))-methyltransferase RlmD (442 aa).

One can recognise a TRAM domain in the interval 10–75; the sequence is AKQTAKNCCK…RQYGRAKANK (66 aa). Positions 88, 94, 97, and 173 each coordinate [4Fe-4S] cluster. Residues Gln-276, Phe-305, Asn-310, Glu-326, Asn-353, and Asp-374 each contribute to the S-adenosyl-L-methionine site. The active-site Nucleophile is the Cys-400.

This sequence belongs to the class I-like SAM-binding methyltransferase superfamily. RNA M5U methyltransferase family. RlmD subfamily.

It carries out the reaction uridine(1939) in 23S rRNA + S-adenosyl-L-methionine = 5-methyluridine(1939) in 23S rRNA + S-adenosyl-L-homocysteine + H(+). Its function is as follows. Catalyzes the formation of 5-methyl-uridine at position 1939 (m5U1939) in 23S rRNA. This chain is 23S rRNA (uracil(1939)-C(5))-methyltransferase RlmD, found in Haemophilus ducreyi (strain 35000HP / ATCC 700724).